The primary structure comprises 312 residues: tRNA dimethylallyltransferase (312 aa).

18 to 25 contributes to the ATP binding site; that stretch reads GPTASGKS. Position 20-25 (20-25) interacts with substrate; the sequence is TASGKS. 2 interaction with substrate tRNA regions span residues 43 to 46 and 167 to 171; these read DSMQ and QRILR.

This sequence belongs to the IPP transferase family. As to quaternary structure, monomer. Mg(2+) is required as a cofactor.

The enzyme catalyses adenosine(37) in tRNA + dimethylallyl diphosphate = N(6)-dimethylallyladenosine(37) in tRNA + diphosphate. In terms of biological role, catalyzes the transfer of a dimethylallyl group onto the adenine at position 37 in tRNAs that read codons beginning with uridine, leading to the formation of N6-(dimethylallyl)adenosine (i(6)A). The polypeptide is tRNA dimethylallyltransferase (Azorhizobium caulinodans (strain ATCC 43989 / DSM 5975 / JCM 20966 / LMG 6465 / NBRC 14845 / NCIMB 13405 / ORS 571)).